The following is a 353-amino-acid chain: MEVFFMRRYSATQINAELFWKFPKFLSINKKYVGLTNDDRMAYMLIKDRYRYSLSNNWIDKDKNVYVYFTIDDLKELLHVGKNKVTRIKQHLIDYGLLEIVKQGFDPQNKKNYPDRIYLLQPEYDPTDLISQSSHASALEQSGIPKMGTRYQNEGNLDNKGKSDSENCNKDTSALEQSGIPKMGANKDNNSSDTIKDTIKDTDQWNFSTNNYTPEQVTAQNQDLLSHLGETLTGDKEAPMFLNKDSINLIAKWFRTPEGASECISTILNAANDSRKNAESQIGHHELYFEDYNNELKRMITNRLRRYFNKMRTAKDGKIKNPKNYLYVSMRNMFDKWQNDVLMAEKDKANNKD.

The disordered stretch occupies residues 132 to 197; the sequence is QSSHASALEQ…DNNSSDTIKD (66 aa). Basic and acidic residues predominate over residues 157 to 169; the sequence is LDNKGKSDSENCN.

The sequence is that of 41 kDa protein from Lactobacillus helveticus (Lactobacillus suntoryeus).